An 89-amino-acid polypeptide reads, in one-letter code: UPF0335 protein CCNA_03428 (89 aa).

This sequence belongs to the UPF0335 family.

The sequence is that of UPF0335 protein CCNA_03428 from Caulobacter vibrioides (strain NA1000 / CB15N) (Caulobacter crescentus).